The chain runs to 448 residues: Bifunctional protein GlmU (448 aa).

Residues 1–232 (MSERSLLVVV…VDEVAGVNSR (232 aa)) form a pyrophosphorylase region. UDP-N-acetyl-alpha-D-glucosamine-binding positions include 11–14 (LAAG), lysine 25, glutamine 78, and 83–84 (GT). Residue aspartate 108 coordinates Mg(2+). UDP-N-acetyl-alpha-D-glucosamine-binding residues include glycine 144, glutamate 158, asparagine 173, and asparagine 230. Asparagine 230 serves as a coordination point for Mg(2+). Residues 233-253 (LQLAEAEAILQGRLRRAAMAG) form a linker region. The interval 254-448 (GATLVAPETV…LRAARGKPKV (195 aa)) is N-acetyltransferase. Positions 319 and 337 each coordinate UDP-N-acetyl-alpha-D-glucosamine. The active-site Proton acceptor is histidine 349. Tyrosine 352 and asparagine 363 together coordinate UDP-N-acetyl-alpha-D-glucosamine. Acetyl-CoA-binding positions include alanine 366, 372-373 (NY), serine 409, and arginine 426.

The protein in the N-terminal section; belongs to the N-acetylglucosamine-1-phosphate uridyltransferase family. This sequence in the C-terminal section; belongs to the transferase hexapeptide repeat family. As to quaternary structure, homotrimer. Mg(2+) is required as a cofactor.

It is found in the cytoplasm. The enzyme catalyses alpha-D-glucosamine 1-phosphate + acetyl-CoA = N-acetyl-alpha-D-glucosamine 1-phosphate + CoA + H(+). It carries out the reaction N-acetyl-alpha-D-glucosamine 1-phosphate + UTP + H(+) = UDP-N-acetyl-alpha-D-glucosamine + diphosphate. Its pathway is nucleotide-sugar biosynthesis; UDP-N-acetyl-alpha-D-glucosamine biosynthesis; N-acetyl-alpha-D-glucosamine 1-phosphate from alpha-D-glucosamine 6-phosphate (route II): step 2/2. The protein operates within nucleotide-sugar biosynthesis; UDP-N-acetyl-alpha-D-glucosamine biosynthesis; UDP-N-acetyl-alpha-D-glucosamine from N-acetyl-alpha-D-glucosamine 1-phosphate: step 1/1. It participates in bacterial outer membrane biogenesis; LPS lipid A biosynthesis. In terms of biological role, catalyzes the last two sequential reactions in the de novo biosynthetic pathway for UDP-N-acetylglucosamine (UDP-GlcNAc). The C-terminal domain catalyzes the transfer of acetyl group from acetyl coenzyme A to glucosamine-1-phosphate (GlcN-1-P) to produce N-acetylglucosamine-1-phosphate (GlcNAc-1-P), which is converted into UDP-GlcNAc by the transfer of uridine 5-monophosphate (from uridine 5-triphosphate), a reaction catalyzed by the N-terminal domain. In Azorhizobium caulinodans (strain ATCC 43989 / DSM 5975 / JCM 20966 / LMG 6465 / NBRC 14845 / NCIMB 13405 / ORS 571), this protein is Bifunctional protein GlmU.